The primary structure comprises 421 residues: Functional amyloid transporter FapF (421 aa).

The signal sequence occupies residues 1 to 24; that stretch reads MTQTLSLRAVLCATTLVSPFLAQA. Residues 23–64 are a coiled coil; that stretch reads QAATESEVEALKKELLELRQRYEAQQNALMVLEQRVRQVEAQ.

Belongs to the amyloid transporter (TC 9.B.153) family.

It localises to the secreted. Its subcellular location is the cell surface. It is found in the cell outer membrane. In terms of biological role, transports fibril components across the outer membrane. Upon overexpression of the endogenous six-gene locus (fapA-fapF), cells form large clumps during liquid growth, make large amounts of biofilm and produce amyloid fibrils. The polypeptide is Functional amyloid transporter FapF (Pseudomonas aeruginosa (strain ATCC 15692 / DSM 22644 / CIP 104116 / JCM 14847 / LMG 12228 / 1C / PRS 101 / PAO1)).